Reading from the N-terminus, the 305-residue chain is UDP-3-O-acyl-N-acetylglucosamine deacetylase (305 aa).

Residues H79, H238, and D242 each coordinate Zn(2+). Catalysis depends on H265, which acts as the Proton donor.

This sequence belongs to the LpxC family. Zn(2+) is required as a cofactor.

It catalyses the reaction a UDP-3-O-[(3R)-3-hydroxyacyl]-N-acetyl-alpha-D-glucosamine + H2O = a UDP-3-O-[(3R)-3-hydroxyacyl]-alpha-D-glucosamine + acetate. It participates in glycolipid biosynthesis; lipid IV(A) biosynthesis; lipid IV(A) from (3R)-3-hydroxytetradecanoyl-[acyl-carrier-protein] and UDP-N-acetyl-alpha-D-glucosamine: step 2/6. Its function is as follows. Catalyzes the hydrolysis of UDP-3-O-myristoyl-N-acetylglucosamine to form UDP-3-O-myristoylglucosamine and acetate, the committed step in lipid A biosynthesis. This chain is UDP-3-O-acyl-N-acetylglucosamine deacetylase, found in Citrobacter koseri (strain ATCC BAA-895 / CDC 4225-83 / SGSC4696).